A 431-amino-acid polypeptide reads, in one-letter code: Glutamyl-tRNA reductase (431 aa).

Substrate is bound by residues 49 to 52 (TCNR), Ser109, 114 to 116 (EGQ), and Gln120. Catalysis depends on Cys50, which acts as the Nucleophile. 189–194 (GAGKMA) provides a ligand contact to NADP(+).

Belongs to the glutamyl-tRNA reductase family. As to quaternary structure, homodimer.

It carries out the reaction (S)-4-amino-5-oxopentanoate + tRNA(Glu) + NADP(+) = L-glutamyl-tRNA(Glu) + NADPH + H(+). The protein operates within porphyrin-containing compound metabolism; protoporphyrin-IX biosynthesis; 5-aminolevulinate from L-glutamyl-tRNA(Glu): step 1/2. It functions in the pathway porphyrin-containing compound metabolism; chlorophyll biosynthesis. Catalyzes the NADPH-dependent reduction of glutamyl-tRNA(Glu) to glutamate 1-semialdehyde (GSA). The chain is Glutamyl-tRNA reductase from Synechococcus sp. (strain JA-3-3Ab) (Cyanobacteria bacterium Yellowstone A-Prime).